The sequence spans 667 residues: Protein OS-9 (667 aa).

A signal peptide spans 1 to 25 (MAAETLLSSLLGLLLLGLLLPASLT). In terms of domain architecture, MRH spans 108 to 230 (APCLLKTKDW…TIRTPRLCPH (123 aa)). Residues Cys110 and Cys123 are joined by a disulfide bond. Trp117, Trp118, and Gln130 together coordinate a mannooligosaccharide derivative. Asn177 carries N-linked (GlcNAc...) asparagine glycosylation. 2 disulfides stabilise this stretch: Cys181–Cys216 and Cys196–Cys228. Positions 182, 188, 212, and 218 each coordinate a mannooligosaccharide derivative. Disordered stretches follow at residues 284-355 (WSET…NNVQ), 372-452 (LKGG…RDRL), 464-483 (LENIIQETEKELDPDGLKKE), 504-540 (LEEKQSPELVKKHKKKRVVPKKPPPSPQPTEEDPEHR), and 633-667 (AQKERQRQKELESNYRRVWGSPGGEGTGDLDEFDF). Composition is skewed to basic and acidic residues over residues 302–311 (TKDDSKDSDF) and 396–412 (PQREPEKERGDPERQRE). Positions 413-429 (MEEEEDEDEDEDEDEDE) are enriched in acidic residues. Over residues 430 to 452 (RQLLGEFEKELEGILLPSDRDRL) the composition is skewed to basic and acidic residues. Basic and acidic residues predominate over residues 504–513 (LEEKQSPELV). Over residues 514–523 (KKHKKKRVVP) the composition is skewed to basic residues. Residues 633 to 647 (AQKERQRQKELESNY) are compositionally biased toward basic and acidic residues.

It belongs to the OS-9 family. Component of the HRD1 complex, which comprises at least SYNV1/HRD1, DERL1/2, FAM8A1, HERPUD1/HERP, OS9, SEL1L and UBE2J1. FAM8A1 is stabilized by interaction with SYNV1, which prevents its proteasomal degradation. OS9 and UBE2J1 recruitment to the complex may be mediated by SEL1L. Through this complex, may interact with ERLEC1 and HSPA5. Interacts (via C-terminus) with CPNE6 (via second C2 domain); this interaction occurs in a calcium-dependent manner in vitro. Interacts with CREB3. Intramolecular disulfide bonds. In terms of processing, isoform 1 and isoform 2 are N-glycosylated. As to expression, ubiquitously expressed. Found as well in all tumor cell lines analyzed, amplified in sarcomas. Highly expressed in osteosarcoma SJSA-1 and rhabdomyosarcoma Rh30 cell lines. Isoform 2 is the major isoform detected in all cell types examined.

Its subcellular location is the endoplasmic reticulum lumen. Its function is as follows. Lectin component of the HRD1 complex, which functions in endoplasmic reticulum (ER) quality control and ER-associated degradation (ERAD). Specifically recognizes and binds improperly folded glycoproteins as well as hyperglycosylated proteins, retain them in the ER, and transfers them to the ubiquitination machinery and promote their degradation. Possible targets include TRPV4 as well as hyperglycosylated HSP90B1. The sequence is that of Protein OS-9 (OS9) from Homo sapiens (Human).